Reading from the N-terminus, the 440-residue chain is Ribulose bisphosphate carboxylase large chain (440 aa).

K4 bears the N6,N6,N6-trimethyllysine mark. Substrate contacts are provided by N113 and T163. Residue K165 is the Proton acceptor of the active site. K167 contacts substrate. Residues K191, D193, and E194 each contribute to the Mg(2+) site. The residue at position 191 (K191) is an N6-carboxylysine. H284 serves as the catalytic Proton acceptor. R285, H317, and S369 together coordinate substrate.

Belongs to the RuBisCO large chain family. Type I subfamily. As to quaternary structure, heterohexadecamer of 8 large chains and 8 small chains; disulfide-linked. The disulfide link is formed within the large subunit homodimers. Requires Mg(2+) as cofactor. In terms of processing, the disulfide bond which can form in the large chain dimeric partners within the hexadecamer appears to be associated with oxidative stress and protein turnover.

The protein resides in the plastid. The protein localises to the chloroplast. It catalyses the reaction 2 (2R)-3-phosphoglycerate + 2 H(+) = D-ribulose 1,5-bisphosphate + CO2 + H2O. The catalysed reaction is D-ribulose 1,5-bisphosphate + O2 = 2-phosphoglycolate + (2R)-3-phosphoglycerate + 2 H(+). Functionally, ruBisCO catalyzes two reactions: the carboxylation of D-ribulose 1,5-bisphosphate, the primary event in carbon dioxide fixation, as well as the oxidative fragmentation of the pentose substrate in the photorespiration process. Both reactions occur simultaneously and in competition at the same active site. The polypeptide is Ribulose bisphosphate carboxylase large chain (Matteuccia struthiopteris (European ostrich fern)).